We begin with the raw amino-acid sequence, 190 residues long: Probable thymidylate kinase (190 aa).

7–14 provides a ligand contact to ATP; the sequence is GIDGAGKT.

It belongs to the thymidylate kinase family.

The catalysed reaction is dTMP + ATP = dTDP + ADP. This Thermoplasma volcanium (strain ATCC 51530 / DSM 4299 / JCM 9571 / NBRC 15438 / GSS1) protein is Probable thymidylate kinase.